The following is a 138-amino-acid chain: Type II secretion system protein I (138 aa).

The propeptide at 1–6 is leader sequence; it reads MKHQRG. An N-methyltyrosine modification is found at Tyr7. A helical transmembrane segment spans residues 7–29; sequence YSLIEVIVAFALLALALTLLLGS.

The protein belongs to the GSP I family. As to quaternary structure, type II secretion is composed of four main components: the outer membrane complex, the inner membrane complex, the cytoplasmic secretion ATPase and the periplasm-spanning pseudopilus. Interacts with core component XpsG. Cleaved by prepilin peptidase. In terms of processing, methylated by prepilin peptidase at the amino group of the N-terminal tyrosine once the leader sequence is cleaved by prepilin peptidase.

It localises to the cell inner membrane. In terms of biological role, component of the type II secretion system required for the energy-dependent secretion of extracellular factors such as proteases and toxins from the periplasm. Part of the pseudopilus tip complex that is critical for the recognition and binding of secretion substrates. The chain is Type II secretion system protein I (xpsI) from Xanthomonas campestris pv. campestris (strain ATCC 33913 / DSM 3586 / NCPPB 528 / LMG 568 / P 25).